Consider the following 1121-residue polypeptide: Putative ATP-dependent RNA helicase ECM32 (1121 aa).

The disordered stretch occupies residues 157–187 (NSTRKPRKKGGRRVGRGKKGRKGAKIKKEKK). Basic residues predominate over residues 160–184 (RKPRKKGGRRVGRGKKGRKGAKIKK). Ser-227 carries the post-translational modification Phosphoserine. The interval 233–452 (AKVSKSETSR…NQEKNNGKTK (220 aa)) is disordered. A compositionally biased stretch (basic residues) spans 251–263 (NKGKGNKANHKKN). A compositionally biased stretch (polar residues) spans 278-287 (IRNNVRNSQP). Positions 307-316 (GKNESVDKHQ) are enriched in basic and acidic residues. Residues 323-336 (LNGNGSGSTNTTGL) show a composition bias toward low complexity. Residues 342 to 363 (DHAGQKTKGNDKTGNKNPREAK) show a composition bias toward basic and acidic residues. The segment covering 376-413 (KSNNQPNKGTSRWTIGSDTESSREPSISPNENTTSITK) has biased composition (polar residues). Position 392 is a phosphoserine (Ser-392). The segment covering 426–452 (LNEKSKTTTMPKKLETKNQEKNNGKTK) has biased composition (basic and acidic residues). Thr-465 carries the phosphothreonine modification. Position 670–677 (670–677 (GPPGTGKT)) interacts with ATP.

This sequence belongs to the DNA2/NAM7 helicase family. As to quaternary structure, interacts with the peptidyl release factors SUP35 and weakly with SUP45.

Its subcellular location is the cytoplasm. It catalyses the reaction ATP + H2O = ADP + phosphate + H(+). Functionally, probable RNA helicase, which may be involved in modulation of the translation termination process. Probably unwinds double-stranded RNA. In vitro, unwinds covalently closed, circular DNA in the presence of a DNA topoisomerase TOP1 and replication factor-A protein RFA1. This chain is Putative ATP-dependent RNA helicase ECM32 (ECM32), found in Saccharomyces cerevisiae (strain ATCC 204508 / S288c) (Baker's yeast).